A 342-amino-acid chain; its full sequence is NADH-ubiquinone oxidoreductase chain 2 (342 aa).

The next 9 membrane-spanning stretches (helical) occupy residues 25–45 (TPWL…IPML), 58–78 (IKYF…ILII), 94–114 (MMIM…FWLP), 146–166 (MSSF…MGGL), 174–194 (ILAY…TISE), 195–215 (NTWE…IFMF), 238–258 (FMMM…GFLP), 274–294 (LVLL…RISF), and 316–336 (VVAL…TSNF).

It belongs to the complex I subunit 2 family.

Its subcellular location is the mitochondrion inner membrane. It carries out the reaction a ubiquinone + NADH + 5 H(+)(in) = a ubiquinol + NAD(+) + 4 H(+)(out). Its function is as follows. Core subunit of the mitochondrial membrane respiratory chain NADH dehydrogenase (Complex I) that is believed to belong to the minimal assembly required for catalysis. Complex I functions in the transfer of electrons from NADH to the respiratory chain. The immediate electron acceptor for the enzyme is believed to be ubiquinone. In Locusta migratoria (Migratory locust), this protein is NADH-ubiquinone oxidoreductase chain 2 (ND2).